The chain runs to 205 residues: Dephospho-CoA kinase (205 aa).

Residues 4 to 203 (KIGITGGIGS…QKIHYLCSAK (200 aa)) form the DPCK domain. Residue 12 to 17 (GSGKSV) participates in ATP binding.

Belongs to the CoaE family.

The protein resides in the cytoplasm. The catalysed reaction is 3'-dephospho-CoA + ATP = ADP + CoA + H(+). It functions in the pathway cofactor biosynthesis; coenzyme A biosynthesis; CoA from (R)-pantothenate: step 5/5. In terms of biological role, catalyzes the phosphorylation of the 3'-hydroxyl group of dephosphocoenzyme A to form coenzyme A. The polypeptide is Dephospho-CoA kinase (Bacteroides fragilis (strain YCH46)).